The sequence spans 145 residues: MKILVINGPNINFLGIREKAIYGKEDYPYLLSLLEGKAKKEGIEIVTFQSNGEGEIIDRIQEAYSDQTDAIIINPGAYTHYSYAIRDALASIEIPKIEVHISNVHKREEFRHVSVTAPVCTGQIVGLGLQGYLLAIDAIISMNIG.

Residue Tyr22 is the Proton acceptor of the active site. Substrate-binding residues include Asn74, His80, and Asp87. His100 functions as the Proton donor in the catalytic mechanism. Residues 101–102 and Arg111 contribute to the substrate site; that span reads IS.

Belongs to the type-II 3-dehydroquinase family. As to quaternary structure, homododecamer.

It catalyses the reaction 3-dehydroquinate = 3-dehydroshikimate + H2O. It participates in metabolic intermediate biosynthesis; chorismate biosynthesis; chorismate from D-erythrose 4-phosphate and phosphoenolpyruvate: step 3/7. Its function is as follows. Catalyzes a trans-dehydration via an enolate intermediate. The protein is 3-dehydroquinate dehydratase of Lachnoclostridium phytofermentans (strain ATCC 700394 / DSM 18823 / ISDg) (Clostridium phytofermentans).